The following is an 869-amino-acid chain: Dimethylglycine dehydrogenase, mitochondrial (869 aa).

Residues 1 to 43 (MLRPGALRLRGLALRGSPRRPSSAGLREGQESPASPPEWKDRA) constitute a mitochondrion transit peptide. Positions 14–39 (LRGSPRRPSSAGLREGQESPASPPEW) are disordered. FAD contacts are provided by residues 52-53 (CV), 73-74 (EK), and 80-88 (GSTWHAAGL). H84 carries the tele-8alpha-FAD histidine modification. N6-acetyllysine is present on K107. Position 141 is an N6-acetyllysine; alternate (K141). K141 is subject to N6-succinyllysine; alternate. K161 is subject to N6-acetyllysine. V212 contributes to the FAD binding site. K216 carries the post-translational modification N6-acetyllysine. W244 lines the FAD pocket. Residues K310 and K312 each carry the N6-succinyllysine modification. 2 positions are modified to N6-acetyllysine: K328 and K353. Residue 390-395 (FGYGII) coordinates FAD. K427, K469, and K516 each carry N6-acetyllysine; alternate. N6-succinyllysine; alternate occurs at positions 427, 469, and 516. Position 573-575 (573-575 (ELT)) interacts with (6S)-5,6,7,8-tetrahydrofolate. The residue at position 648 (K648) is an N6-acetyllysine; alternate. Residue K648 is modified to N6-succinyllysine; alternate. (6S)-5,6,7,8-tetrahydrofolate is bound by residues Y669, 676 to 678 (ELY), and Y737. K757 carries the N6-acetyllysine modification. K786 carries the N6-acetyllysine; alternate modification. K786 carries the N6-succinyllysine; alternate modification. K788 carries the post-translational modification N6-succinyllysine.

Belongs to the GcvT family. Requires FAD as cofactor.

Its subcellular location is the mitochondrion. It catalyses the reaction (6S)-5,6,7,8-tetrahydrofolyl-(gamma-L-Glu)(n) + N,N-dimethylglycine + oxidized [electron-transfer flavoprotein] + H(+) = (6R)-5,10-methylenetetrahydrofolyl-(gamma-L-Glu)(n) + sarcosine + reduced [electron-transfer flavoprotein]. The protein operates within amine and polyamine degradation; betaine degradation; sarcosine from betaine: step 2/2. Its function is as follows. Catalyzes the demethylation of N,N-dimethylglycine to sarcosine. Also has activity with sarcosine in vitro. The polypeptide is Dimethylglycine dehydrogenase, mitochondrial (Dmgdh) (Mus musculus (Mouse)).